The primary structure comprises 130 residues: Organic solute transporter subunit beta (130 aa).

At 1-35 (MNYSEKLTGAPPMTEVPLELLEEMLWFFRVEDATP) the chain is on the extracellular side. A helical transmembrane segment spans residues 36–56 (WNCSMFVLAALVAIISFILLG). The Cytoplasmic segment spans residues 57–130 (RNIQANRNQK…HLPDPQEPES (74 aa)). The interval 99–130 (LSEKPTLAQGEMEAKCSDVPRVHLPDPQEPES) is disordered. The span at 110–124 (MEAKCSDVPRVHLPD) shows a compositional bias: basic and acidic residues.

It belongs to the OST-beta family. In terms of assembly, interacts with SLC51A. The Ost-alpha/Ost-beta complex is a heterodimer composed of alpha (SLC51A) and beta (SLC51B) subunit; induces the transport of SLC51A from the endoplasmic reticulum to the plasma membrane.

The protein resides in the cell membrane. The enzyme catalyses taurocholate(out) = taurocholate(in). It catalyses the reaction estrone 3-sulfate(out) = estrone 3-sulfate(in). The catalysed reaction is dehydroepiandrosterone 3-sulfate(out) = dehydroepiandrosterone 3-sulfate(in). It carries out the reaction tauroursodeoxycholate(out) = tauroursodeoxycholate(in). The enzyme catalyses glycoursodeoxycholate(out) = glycoursodeoxycholate(in). It catalyses the reaction glycocholate(out) = glycocholate(in). The catalysed reaction is taurochenodeoxycholate(out) = taurochenodeoxycholate(in). It carries out the reaction glycochenodeoxycholate(out) = glycochenodeoxycholate(in). The enzyme catalyses taurodeoxycholate(out) = taurodeoxycholate(in). It catalyses the reaction glycodeoxycholate(out) = glycodeoxycholate(in). The catalysed reaction is prostaglandin E2(out) = prostaglandin E2(in). Essential component of the Ost-alpha/Ost-beta complex, a heterodimer that acts as the intestinal basolateral transporter responsible for bile acid export from enterocytes into portal blood. The Ost-alpha/Ost-beta complex efficiently transports the major species of bile acids (taurocholate). Taurine conjugates are transported more efficiently across the basolateral membrane than glycine-conjugated bile acids. Can also transport steroids such as estrone 3-sulfate and dehydroepiandrosterone 3-sulfate, therefore playing a role in the enterohepatic circulation of sterols. Able to transport eicosanoids such as prostaglandin E2. Modulates SLC51A glycosylation, membrane trafficking and stability activities. The protein is Organic solute transporter subunit beta (SLC51B) of Bos taurus (Bovine).